The chain runs to 41 residues: MYIEGVKIKKIAMFFLGILVGVFIVLFFRNYFVLLLEYIFG.

Residues 8–28 traverse the membrane as a helical segment; the sequence is IKKIAMFFLGILVGVFIVLFF.

Its subcellular location is the membrane. This is an uncharacterized protein from Streptococcus pneumoniae serotype 2 (strain D39 / NCTC 7466).